The primary structure comprises 1128 residues: Probable serine/threonine-protein kinase DDB_G0283337 (1128 aa).

Over residues 1–17 (MENNNNNNINKTNTPNN) the composition is skewed to low complexity. Disordered regions lie at residues 1-21 (MENNNNNNINKTNTPNNSFSP), 60-100 (INHN…NNNN), 131-151 (RESNSNNNSNNSNININNNSN), 236-256 (NNSKEDCNSSNNSYDNDSNSN), and 375-504 (NDNE…NSEQ). 2 stretches are compositionally biased toward low complexity: residues 243–256 (NSSNNSYDNDSNSN) and 375–502 (NDNE…NNNS). The Protein kinase domain maps to 777 to 1054 (LSDFSIIGEG…EIQKCKEEYE (278 aa)). Residues 783–791 (IGEGGFSTV) and lysine 809 contribute to the ATP site. Aspartate 904 functions as the Proton acceptor in the catalytic mechanism.

It belongs to the protein kinase superfamily. Ser/Thr protein kinase family.

The catalysed reaction is L-seryl-[protein] + ATP = O-phospho-L-seryl-[protein] + ADP + H(+). The enzyme catalyses L-threonyl-[protein] + ATP = O-phospho-L-threonyl-[protein] + ADP + H(+). The sequence is that of Probable serine/threonine-protein kinase DDB_G0283337 from Dictyostelium discoideum (Social amoeba).